A 226-amino-acid polypeptide reads, in one-letter code: ATP-dependent dethiobiotin synthetase BioD (226 aa).

Residue Asp13–Val18 participates in ATP binding. Thr17 lines the Mg(2+) pocket. Lys38 is an active-site residue. ATP-binding positions include Asp55, Glu116 to Gly119, and Asn176 to Arg177. Mg(2+)-binding residues include Asp55 and Glu116.

This sequence belongs to the dethiobiotin synthetase family. Homodimer. Requires Mg(2+) as cofactor.

The protein localises to the cytoplasm. The enzyme catalyses (7R,8S)-7,8-diammoniononanoate + CO2 + ATP = (4R,5S)-dethiobiotin + ADP + phosphate + 3 H(+). The protein operates within cofactor biosynthesis; biotin biosynthesis; biotin from 7,8-diaminononanoate: step 1/2. In terms of biological role, catalyzes a mechanistically unusual reaction, the ATP-dependent insertion of CO2 between the N7 and N8 nitrogen atoms of 7,8-diaminopelargonic acid (DAPA, also called 7,8-diammoniononanoate) to form a ureido ring. The polypeptide is ATP-dependent dethiobiotin synthetase BioD (Aliivibrio fischeri (strain MJ11) (Vibrio fischeri)).